The following is a 454-amino-acid chain: Protein pid-2 (454 aa).

Positions 31 to 61 are disordered; sequence VQNNQKEHPPVQEIKTVSSKSKEHRVSSSRK. A compositionally biased stretch (basic and acidic residues) spans 50-61; sequence KSKEHRVSSSRK.

As to quaternary structure, may interact with pid-4, pid-5, app-1 and prmt-5. Expressed throughout the mitotic and meiotic regions of the germline and in oocytes.

It localises to the cytoplasm. The protein localises to the perinuclear region. Its subcellular location is the cytoplasmic granule. Its function is as follows. Involved in gene silencing mediated by a class of 21 nucleotide PIWI-interacting RNAs (piRNAs) that possess a uracil residue at the 5'-end (also called 21U-RNAs) and that guide the Piwi protein prg-1 to its DNA targets for silencing. Not required for the biogenesis of 21U-RNAs. May also be involved in gene silencing mediated by 22G-siRNAs (a class of 22 nucleotide endogenous small interfering RNAs (siRNAs) that possess a triphosphorylated guanine residue at the 5'-end) and 26G-siRNAs (a class of 26 nucleotide siRNAs that possess a guanine residue at the 5'-end). Required for the biogenesis of secondary and tertiary 22G-siRNAs from many loci. Specifically, promotes the production of 22G-siRNAs from the 5' end of target mRNAs. May play a role in the production of 26G-siRNAs. Plays a role in small RNA-directed transgenerational epigenetic inheritance (also called RNAe) over several generations and germline immortality. Together with the argonaut protein hrde-1, promotes the silencing of the DNA transposable element Tc1. Required for the formation of liquid-like condensates in the cytoplasm called Z granules, playing a role in maintaining their assembly, viscosity and morphology in adult germ cells, and localization in early embryos. The polypeptide is Protein pid-2 (Caenorhabditis elegans).